The primary structure comprises 415 residues: Acetate kinase (415 aa).

N8 provides a ligand contact to Mg(2+). Residue K15 coordinates ATP. R106 lines the substrate pocket. Residue D163 is the Proton donor/acceptor of the active site. Residues 222-226 (HLGNG), 296-298 (DLR), and 344-348 (GIGEN) each bind ATP. Residue E397 coordinates Mg(2+).

Belongs to the acetokinase family. Homodimer. It depends on Mg(2+) as a cofactor. Mn(2+) is required as a cofactor.

It localises to the cytoplasm. It catalyses the reaction acetate + ATP = acetyl phosphate + ADP. It participates in metabolic intermediate biosynthesis; acetyl-CoA biosynthesis; acetyl-CoA from acetate: step 1/2. In terms of biological role, catalyzes the formation of acetyl phosphate from acetate and ATP. Can also catalyze the reverse reaction. This is Acetate kinase from Thermosynechococcus vestitus (strain NIES-2133 / IAM M-273 / BP-1).